Reading from the N-terminus, the 422-residue chain is Phosphoribosylamine--glycine ligase (422 aa).

Positions 107 to 314 constitute an ATP-grasp domain; the sequence is KAFMQRHGIP…LFDVLDRAID (208 aa). 133–194 contributes to the ATP binding site; that stretch reads VDREGAPIVI…EEFLAGEEAS (62 aa). Mg(2+)-binding residues include glutamate 284 and asparagine 286.

The protein belongs to the GARS family. Mg(2+) serves as cofactor. Mn(2+) is required as a cofactor.

The enzyme catalyses 5-phospho-beta-D-ribosylamine + glycine + ATP = N(1)-(5-phospho-beta-D-ribosyl)glycinamide + ADP + phosphate + H(+). Its pathway is purine metabolism; IMP biosynthesis via de novo pathway; N(1)-(5-phospho-D-ribosyl)glycinamide from 5-phospho-alpha-D-ribose 1-diphosphate: step 2/2. The polypeptide is Phosphoribosylamine--glycine ligase (Ralstonia nicotianae (strain ATCC BAA-1114 / GMI1000) (Ralstonia solanacearum)).